A 228-amino-acid polypeptide reads, in one-letter code: F-box protein At5g67140 (228 aa).

The F-box domain occupies 4-51 (EAAIDRLPLDLLAYIFSLATSFTVLAQASGVCKKWRKAVNQSMARRET).

This chain is F-box protein At5g67140, found in Arabidopsis thaliana (Mouse-ear cress).